The primary structure comprises 366 residues: NADP-dependent isopropanol dehydrogenase (366 aa).

The Zn(2+) site is built by C43, H65, E66, and D156. Residues 181-184 (IGPV), 204-206 (GSR), Y224, 271-273 (VNY), and K346 each bind NADP(+).

Belongs to the zinc-containing alcohol dehydrogenase family. In terms of assembly, homodimer. Zn(2+) serves as cofactor.

Its subcellular location is the cytoplasm. It carries out the reaction propan-2-ol + NADP(+) = acetone + NADPH + H(+). Its function is as follows. Alcohol dehydrogenase with a preference for medium chain secondary alcohols, such as 2-butanol and isopropanol. Has very low activity with primary alcohols, such as ethanol. Under physiological conditions, the enzyme reduces aldehydes and 2-ketones to produce secondary alcohols. Is also active with acetaldehyde and propionaldehyde. The chain is NADP-dependent isopropanol dehydrogenase from Entamoeba histolytica (strain ATCC 30459 / HM-1:IMSS / ABRM).